Consider the following 1412-residue polypeptide: Cardiac-enriched FHL2-interacting protein (1412 aa).

7 disordered regions span residues 106 to 177 (VQGE…PKFA), 202 to 443 (VSNT…YNPP), 460 to 500 (LETS…SKAP), 517 to 848 (YSPL…TNKH), 877 to 923 (SEDS…VPGT), 935 to 1255 (EDPV…YPAT), and 1344 to 1412 (RQGS…EGVS). The residue at position 120 (threonine 120) is a Phosphothreonine. Over residues 135–145 (SSSKPISKVSS) the composition is skewed to low complexity. Positions 161-171 (RPPPSKPPALK) are enriched in pro residues. The segment covering 202–212 (VSNTHQGSHQS) has biased composition (polar residues). 2 stretches are compositionally biased toward basic and acidic residues: residues 285-299 (WDTHQPKLRERKDIA) and 306-316 (KAPKHYEDMPL). Position 328 is a phosphoserine (serine 328). Residues 343 to 352 (SPSGSQSTSG) are compositionally biased toward polar residues. A compositionally biased stretch (basic residues) spans 378 to 389 (KRSKAPWRKPKT). Phosphoserine is present on serine 473. 2 stretches are compositionally biased toward basic and acidic residues: residues 482–496 (QEKESSEAQSRDSYK) and 525–538 (GFDEKTRGKLDSKQ). A compositionally biased stretch (low complexity) spans 587–612 (SHPTFSSPSASSQTHFCVNGEAAESN). Residues 632–641 (GHPDCRENLP) show a composition bias toward basic and acidic residues. 3 stretches are compositionally biased toward polar residues: residues 670 to 679 (NGLSRSVSQE), 687 to 697 (GFQSLPLNQKF), and 712 to 722 (SDSQSDFTPCR). A compositionally biased stretch (low complexity) spans 728–741 (FSTSSSDQSFASFE). Basic and acidic residues predominate over residues 753 to 799 (QEDRKSHVSAGDKQRDETAVEKEESQQCASRNEHRGVDEQRQEEIQR). Serine 813 is modified (phosphoserine). Residues 826-837 (ADKDTAHTHAKD) are compositionally biased toward basic and acidic residues. Composition is skewed to polar residues over residues 904–921 (ASESQEMPNTPLSNNDVP), 943–953 (QDETSQQTRKG), and 1047–1066 (AETSPNPSSLGESSTCSPAA). Residues 1164–1175 (RRAKKLASKRRK) are compositionally biased toward basic residues. The segment covering 1176-1203 (SDQLLEKHTEAWEGKSFTEDTQGTERRP) has biased composition (basic and acidic residues). Acidic residues predominate over residues 1401-1412 (DDLEDFATEGVS).

Interacts with FHL2. Expressed in the heart and skeletal muscle (at protein level).

It localises to the cytoplasm. Its subcellular location is the myofibril. It is found in the sarcomere. The protein localises to the z line. In terms of biological role, plays an important role in cardiomyocyte hypertrophy via activation of the calcineurin/NFAT signaling pathway. The protein is Cardiac-enriched FHL2-interacting protein of Mus musculus (Mouse).